Reading from the N-terminus, the 792-residue chain is Type 2 topoisomerase subunit B (792 aa).

The Toprim domain occupies 423 to 537; the sequence is CEIFLVEGDS…EGYVYIAEPP (115 aa). Residues Glu429, Asp502, and Asp504 each coordinate Mg(2+).

This sequence belongs to the type II topoisomerase GyrB family. Heterotetramer, composed of two GyrA and two GyrB chains. In the heterotetramer, 'GyrA' contains the active site tyrosine that forms a transient covalent intermediate with DNA, while 'GyrB' binds cofactors and catalyzes ATP hydrolysis. Requires Mg(2+) as cofactor. Mn(2+) serves as cofactor. Ca(2+) is required as a cofactor.

Its subcellular location is the cytoplasm. It catalyses the reaction ATP-dependent breakage, passage and rejoining of double-stranded DNA.. Its function is as follows. A type II topoisomerase. Despite its similarity to DNA gyrase, this enzyme is not able to supercoil DNA, and instead acts like topoisomerase IV. Relaxes both positively and negatively supercoiled DNA in an ATP-dependent fashion, decatenates interlocked circles. If this subunit is reconstituted with GyrA from E.coli the hybrid enzyme supercoils relaxed plasmid DNA; if paired with E.coli ParC supercoiling is not restored. This the first bacteria shown to not contain DNA gyrase, although it has 2 copies of a reverse gyrase that introduces positive supercoils. Type II topoisomerases break and join 2 DNA strands simultaneously in an ATP-dependent manner. This chain is Type 2 topoisomerase subunit B, found in Aquifex aeolicus (strain VF5).